The following is a 117-amino-acid chain: Gamma-aminobutyric acid receptor-associated protein (117 aa).

Positions 1 to 22 (MKFVYKEEHPFEKRRSEGEKIR) are interaction with beta-tubulin. The segment at 36-68 (APKARIGDLDKKKYLVPSDLTVGQFYFLIRKRI) is interaction with GABRG2. Positions 36 to 117 (APKARIGDLD…AYSDESVYGL (82 aa)) are interaction with GPHN. Residues 48 to 50 (KYL) are interaction with LIR (LC3 nteracting Region) motif of ATG3. Gly-116 carries the Phosphatidylethanolamine amidated glycine; alternate lipid modification. A lipid anchor (Phosphatidylserine amidated glycine; alternate) is attached at Gly-116. Position 117 (Leu-117) is a propeptide, removed in mature form.

This sequence belongs to the ATG8 family. As to quaternary structure, interacts with GPHN and NSF. Interacts with ATG3, ATG7 and ATG13. Interacts with alpha-tubulin. Interacts with beta-tubulin. Interacts with GABRG2. Interacts with RB1CC1. Interacts with ULK1. Interacts with CALR. Interacts with DDX47. Interacts with TP53INP1 and TP53INP2. Interacts with TBC1D5. Interacts with TBC1D25. Directly interacts with SQSTM1. Interacts with MAPK15. Interacts with TECPR2. Interacts with PCM1. Interacts with TRIM5 and TRIM21. Interacts with MEFV. Interacts with KIF21B. Interacts with WDFY3; this interaction is required for WDFY3 recruitment to MAP1LC3B-positive p62/SQSTM1 bodies. Interacts with FLCN; interaction regulates autophagy. Interacts with UBA5. Interacts with KBTBD6 and KBTBD7; the interaction is direct and required for the ubiquitination of TIAM1. Interacts with reticulophagy regulators RETREG1, RETREG2 and RETREG3. Interacts with IRGM. Interacts with STX17. Interacts with CT55; this interaction may be important for GABARAP protein stability. Interacts with DNM2. Interacts with NCOA4 (via C-terminus). Post-translationally, the precursor molecule is cleaved by ATG4 (ATG4A, ATG4B, ATG4C or ATG4D) to expose the glycine at the C-terminus and form the cytosolic form, GABARAP-I. The processed form is then activated by APG7L/ATG7, transferred to ATG3 and conjugated to phosphatidylethanolamine (PE) phospholipid to form the membrane-bound form, GABARAP-II. During non-canonical autophagy, the processed form is conjugated to phosphatidylserine (PS) phospholipid. ATG4 proteins also mediate the delipidation of PE-conjugated forms. In addition, ATG4B and ATG4D mediate delipidation of ATG8 proteins conjugated to PS during non-canonical autophagy. ATG4B constitutes the major protein for proteolytic activation. ATG4D is the main enzyme for delipidation activity. As to expression, expressed in brain (at protein level). Can be found in both somatodendritic and axonal compartment of neurons.

It localises to the cytoplasmic vesicle. The protein resides in the autophagosome membrane. The protein localises to the endomembrane system. It is found in the cytoplasm. Its subcellular location is the cytoskeleton. It localises to the golgi apparatus membrane. Its function is as follows. Ubiquitin-like modifier that plays a role in intracellular transport of GABA(A) receptors and its interaction with the cytoskeleton. Involved in autophagy: while LC3s are involved in elongation of the phagophore membrane, the GABARAP/GATE-16 subfamily is essential for a later stage in autophagosome maturation. Through its interaction with the reticulophagy receptor TEX264, participates in the remodeling of subdomains of the endoplasmic reticulum into autophagosomes upon nutrient stress, which then fuse with lysosomes for endoplasmic reticulum turnover. Also required for the local activation of the CUL3(KBTBD6/7) E3 ubiquitin ligase complex, regulating ubiquitination a nd degradation of TIAM1, a guanyl-nucleotide exchange factor (GEF) that activates RAC1 and downstream signal transduction. Thereby, regulates different biological processes including the organization of the cytoskeleton, cell migration and proliferation. Involved in apoptosis. This chain is Gamma-aminobutyric acid receptor-associated protein, found in Rattus norvegicus (Rat).